Reading from the N-terminus, the 1125-residue chain is Exportin-6 (1125 aa).

An N-acetylalanine modification is found at Ala-2. Positions 31 to 97 constitute an Importin N-terminal domain; the sequence is IEELLNNFAQ…RSCLPKLLLA (67 aa). The residue at position 199 (Ser-199) is a Phosphoserine. Thr-201 and Thr-204 each carry phosphothreonine. Residues Ser-208 and Ser-224 each carry the phosphoserine modification.

The protein belongs to the exportin family. Found in a complex with XPO6, Ran, ACTB and PFN1. Interacts with ACTB. Interacts with ACTB in a RanGTP-dependent manner.

It is found in the nucleus. Its subcellular location is the cytoplasm. Functionally, mediates the nuclear export of actin and profilin-actin complexes in somatic cells. The polypeptide is Exportin-6 (XPO6) (Homo sapiens (Human)).